Here is a 460-residue protein sequence, read N- to C-terminus: Notoamide biosynthesis cluster transcriptional coactivator notR (460 aa).

An HTH iclR-type domain is found at 74–145; sequence LQDLARQVEI…EPMPNYVSHT (72 aa). Residues 107 to 126 constitute a DNA-binding region (H-T-H motif); that stretch reads IQDLADLAGVPDIQLRRVIR. Residues 300 to 320 form a disordered region; it reads TRDFTPQPESSPRPGSASSRV.

The protein localises to the nucleus. In terms of biological role, transcription factor that probably regulates the expression of the gene cluster that mediates the biosynthesis of notoamide, a fungal indole alkaloid that belongs to a family of natural products containing a characteristic bicyclo[2.2.2]diazaoctane core. The protein is Notoamide biosynthesis cluster transcriptional coactivator notR of Aspergillus sp. (strain MF297-2).